We begin with the raw amino-acid sequence, 373 residues long: CXADR-like membrane protein (373 aa).

An N-terminal signal peptide occupies residues Met1–Gly18. Ig-like C2-type domains follow at residues Thr19–Lys127 and Pro135–Thr224. Residues Thr19–Ala235 lie on the Extracellular side of the membrane. 2 disulfides stabilise this stretch: Cys35–Cys111 and Cys153–Cys208. Asn74 and Asn197 each carry an N-linked (GlcNAc...) asparagine glycan. The chain crosses the membrane as a helical span at residues Gly236–Ile256. Residues Arg257–Val373 are Cytoplasmic-facing. Over residues Tyr264–Lys281 the composition is skewed to basic and acidic residues. Residues Tyr264–Val373 are disordered. Residues Ser288 to Ser314 are compositionally biased toward low complexity. The span at Lys355 to Val373 shows a compositional bias: polar residues.

In terms of tissue distribution, predominantly expressed in epithelial cells within different tissues and in the white adipose tissue. Expressed at high levels in small intestine and placenta, at intermediate levels in the heart, skeletal muscle, colon, spleen, kidney and lung and at low levels in the liver and peripheral blood leukocytes. Highly abundant in the intestine during embryo and fetal development (at protein level).

It is found in the cell junction. The protein resides in the tight junction. The protein localises to the cell membrane. Its function is as follows. May be involved in the cell-cell adhesion. May play a role in adipocyte differentiation and development of obesity. Is required for normal small intestine development. This is CXADR-like membrane protein (CLMP) from Homo sapiens (Human).